The primary structure comprises 1958 residues: Callose synthase 7 (1958 aa).

Residues 1–29 (MASTSSGGRGEDGRPPQMQPVRSMSRKMT) form a disordered region. Residues 1 to 504 (MASTSSGGRG…LYRSFDRMWM (504 aa)) are Cytoplasmic-facing. Residues 505–525 (FLVLSLQTMIIVAWHPSGSIL) traverse the membrane as a helical segment. Topologically, residues 526 to 535 (AIFTEDVFRN) are extracellular. The chain crosses the membrane as a helical span at residues 536–556 (VLTIFITSAFLNLLQATLDLV). Residues 557-569 (LSFGAWKSLKFSQ) are Cytoplasmic-facing. The helical transmembrane segment at 570 to 590 (IMRYITKFLMAAMWAIMLPIT) threads the bilayer. Over 591-620 (YSKSVQNPTGLIKFFSSWVGSWLHRSLYDY) the chain is Extracellular. Residues 621-641 (AIALYVLPNILAAVFFLLPPL) form a helical membrane-spanning segment. Over 642–673 (RRIMERSNMRIVTLIMWWAQPKLYIGRGMHEE) the chain is Cytoplasmic. The helical transmembrane segment at 674 to 694 (MFALFKYTFFWVMLLLSKLAF) threads the bilayer. Residues 695-730 (SYYVEILPLVNPTKLIWDMHVVNYEWHEFFPNATHN) lie on the Extracellular side of the membrane. The helical transmembrane segment at 731 to 751 (IGVIIAIWGPIVLVYFMDTQI) threads the bilayer. Residues 752–1496 (WYAIFSTLFG…FDFYRMLSFY (745 aa)) lie on the Cytoplasmic side of the membrane. The chain crosses the membrane as a helical span at residues 1497 to 1517 (FTTVGFYFSSMITVLTVYVFL). Residues 1518 to 1547 (YGRLYLVLSGLEKNILQSASVHESNALEQA) are Extracellular-facing. Residues 1548 to 1568 (LAAQSVFQLGFLMVLPMVMEI) traverse the membrane as a helical segment. The Cytoplasmic portion of the chain corresponds to 1569–1576 (GLEKGFRT). A helical transmembrane segment spans residues 1577–1597 (ALGDFIIMQLQLASVFFTFQL). At 1598–1640 (GTKAHYFGRTILHGGSKYRATGRGFVVFHAKFAENYRLYSRSH) the chain is on the extracellular side. Residues 1641–1661 (FVKGLELVILLVVYQVYGTSY) traverse the membrane as a helical segment. At 1662–1667 (RSSSTY) the chain is on the cytoplasmic side. Residues 1668-1688 (MYITFSMWFLVTSWLFAPFIF) traverse the membrane as a helical segment. The Extracellular portion of the chain corresponds to 1689 to 1742 (NPSGFEWQKTVDDWTDWKRWMGNRGGIGIVLDKSWESWWDIEQEHLKHTNLRGR). Residues 1743–1763 (VLEILLALRFLLYQYGIVYHL) traverse the membrane as a helical segment. Topologically, residues 1764–1771 (NIARRHTT) are cytoplasmic. Residues 1772 to 1792 (FLVYGLSWAILLSVLLVLKMV) form a helical membrane-spanning segment. At 1793-1812 (SMGRRKFGTDFQVMFRILKA) the chain is on the extracellular side. The chain crosses the membrane as a helical span at residues 1813–1833 (LLFLGFLSVMTVLFVVCGLTI). The Cytoplasmic segment spans residues 1834 to 1835 (SD). Residues 1836 to 1856 (LFASILAFLPTGWAILLIGQA) traverse the membrane as a helical segment. The Extracellular portion of the chain corresponds to 1857–1878 (LRSVFKGLGFWDSVKELGRAYE). A helical transmembrane segment spans residues 1879-1899 (YIMGLVIFTPIAVLSWFPFVS). Topologically, residues 1900 to 1958 (EFQTRLLFNQAFSRGLQISMILAGKKDKETPSTKYLGHTEESFGLEHDTNTFNHYYLWT) are cytoplasmic.

It belongs to the glycosyltransferase 48 family.

It is found in the cell membrane. It catalyses the reaction [(1-&gt;3)-beta-D-glucosyl](n) + UDP-alpha-D-glucose = [(1-&gt;3)-beta-D-glucosyl](n+1) + UDP + H(+). Functionally, involved in callose synthesis at the forming cell plate during cytokinesis. During plant growth and development, callose is found as a transitory component of the cell plate in dividing cells, is a major component of pollen mother cell walls and pollen tubes, and is found as a structural component of plasmodesmatal canals. This Arabidopsis thaliana (Mouse-ear cress) protein is Callose synthase 7 (CALS7).